The following is a 186-amino-acid chain: MKLYASEIRVGMLIEYKNDLWQVLKTQHVKPGKGGAFAQVEMKSVNKNTKLNERFRSSESVEKASLDETKFNYLYSDEIDYYFMDPKSYEQINIKKETIGEKGKMLTENLEVSISFYNEKPLTVELPNQVTCTVDTTDVALKGQTVSSSYKPATLDNGVNIQVPPFIESGDKIIVDTRTMEYVKKI.

This sequence belongs to the elongation factor P family.

The protein localises to the cytoplasm. Its pathway is protein biosynthesis; polypeptide chain elongation. Its function is as follows. Involved in peptide bond synthesis. Stimulates efficient translation and peptide-bond synthesis on native or reconstituted 70S ribosomes in vitro. Probably functions indirectly by altering the affinity of the ribosome for aminoacyl-tRNA, thus increasing their reactivity as acceptors for peptidyl transferase. This Pelagibacter ubique (strain HTCC1062) protein is Elongation factor P.